The sequence spans 61 residues: Small ribosomal subunit protein uS14B (61 aa).

The Zn(2+) site is built by Cys24, Cys27, Cys40, and Cys43.

This sequence belongs to the universal ribosomal protein uS14 family. Zinc-binding uS14 subfamily. Part of the 30S ribosomal subunit. Contacts proteins S3 and S10. Zn(2+) is required as a cofactor.

Its function is as follows. Binds 16S rRNA, required for the assembly of 30S particles and may also be responsible for determining the conformation of the 16S rRNA at the A site. The polypeptide is Small ribosomal subunit protein uS14B (Limosilactobacillus reuteri (strain DSM 20016) (Lactobacillus reuteri)).